A 279-amino-acid polypeptide reads, in one-letter code: Putative F-box protein At1g50880 (279 aa).

The 51-residue stretch at 19-69 (SSSMSSIPLDVTSKILAKLPAKSVLRARCVSKQWSSISTDPYFISNMFPKQ) folds into the F-box domain.

This chain is Putative F-box protein At1g50880, found in Arabidopsis thaliana (Mouse-ear cress).